We begin with the raw amino-acid sequence, 388 residues long: Chorismate synthase (388 aa).

Residues Arg-39 and Arg-45 each contribute to the NADP(+) site. FMN-binding positions include 130–132 (RSS), 251–252 (NA), Gly-296, 311–315 (KPIPT), and Arg-337.

The protein belongs to the chorismate synthase family. As to quaternary structure, homotetramer. FMNH2 is required as a cofactor.

It carries out the reaction 5-O-(1-carboxyvinyl)-3-phosphoshikimate = chorismate + phosphate. It functions in the pathway metabolic intermediate biosynthesis; chorismate biosynthesis; chorismate from D-erythrose 4-phosphate and phosphoenolpyruvate: step 7/7. Functionally, catalyzes the anti-1,4-elimination of the C-3 phosphate and the C-6 proR hydrogen from 5-enolpyruvylshikimate-3-phosphate (EPSP) to yield chorismate, which is the branch point compound that serves as the starting substrate for the three terminal pathways of aromatic amino acid biosynthesis. This reaction introduces a second double bond into the aromatic ring system. The polypeptide is Chorismate synthase (Geobacillus thermodenitrificans (strain NG80-2)).